We begin with the raw amino-acid sequence, 123 residues long: MPTMKQLIRNTRQPIRNVTKSPALQGCPQRRGTCTRVYTITPKKPNSALRKVARVRLTSGFEITAYIPGIGHNLQEHSVVLVRGGRVKDLPGVRYHIVRGTLDAVGVKDRQQGRSKYGAKKPK.

Belongs to the universal ribosomal protein uS12 family. As to quaternary structure, part of the 30S ribosomal subunit.

It localises to the plastid. It is found in the chloroplast. Its function is as follows. With S4 and S5 plays an important role in translational accuracy. Located at the interface of the 30S and 50S subunits. This is Small ribosomal subunit protein uS12cz/uS12cy (rps12-A) from Phaseolus vulgaris (Kidney bean).